A 469-amino-acid polypeptide reads, in one-letter code: 3-isopropylmalate dehydratase large subunit (469 aa).

[4Fe-4S] cluster contacts are provided by cysteine 347, cysteine 407, and cysteine 410.

This sequence belongs to the aconitase/IPM isomerase family. LeuC type 1 subfamily. As to quaternary structure, heterodimer of LeuC and LeuD. [4Fe-4S] cluster is required as a cofactor.

The catalysed reaction is (2R,3S)-3-isopropylmalate = (2S)-2-isopropylmalate. Its pathway is amino-acid biosynthesis; L-leucine biosynthesis; L-leucine from 3-methyl-2-oxobutanoate: step 2/4. Catalyzes the isomerization between 2-isopropylmalate and 3-isopropylmalate, via the formation of 2-isopropylmaleate. The protein is 3-isopropylmalate dehydratase large subunit of Synechococcus sp. (strain RCC307).